The primary structure comprises 449 residues: Adenylosuccinate synthetase (449 aa).

Residues 12–18 and 40–42 contribute to the GTP site; these read GDEGKGK and GHT. Aspartate 13 acts as the Proton acceptor in catalysis. 2 residues coordinate Mg(2+): aspartate 13 and glycine 40. Residues 13 to 16, 38 to 41, threonine 128, arginine 142, glutamine 223, threonine 238, and arginine 302 each bind IMP; these read DEGK and NAGH. Histidine 41 serves as the catalytic Proton donor. Residue 298–304 participates in substrate binding; it reads TTTGRRR. Residues arginine 304, 330–332, and 412–414 each bind GTP; these read KLD and SLG.

The protein belongs to the adenylosuccinate synthetase family. Homodimer. Requires Mg(2+) as cofactor.

It is found in the cytoplasm. The catalysed reaction is IMP + L-aspartate + GTP = N(6)-(1,2-dicarboxyethyl)-AMP + GDP + phosphate + 2 H(+). It participates in purine metabolism; AMP biosynthesis via de novo pathway; AMP from IMP: step 1/2. In terms of biological role, plays an important role in the de novo pathway of purine nucleotide biosynthesis. Catalyzes the first committed step in the biosynthesis of AMP from IMP. This Gloeothece citriformis (strain PCC 7424) (Cyanothece sp. (strain PCC 7424)) protein is Adenylosuccinate synthetase.